A 99-amino-acid polypeptide reads, in one-letter code: Ubiquitin-related modifier 1 (99 aa).

G99 is subject to 1-thioglycine. A Glycyl lysine isopeptide (Gly-Lys) (interchain with K-? in acceptor proteins) cross-link involves residue G99.

Belongs to the URM1 family. Post-translationally, C-terminal thiocarboxylation occurs in 2 steps, it is first acyl-adenylated (-COAMP) via the hesA/moeB/thiF part of UBA4, then thiocarboxylated (-COSH) via the rhodanese domain of UBA4.

The protein localises to the cytoplasm. The protein operates within tRNA modification; 5-methoxycarbonylmethyl-2-thiouridine-tRNA biosynthesis. Functionally, acts as a sulfur carrier required for 2-thiolation of mcm(5)S(2)U at tRNA wobble positions of cytosolic tRNA(Lys), tRNA(Glu) and tRNA(Gln). Serves as sulfur donor in tRNA 2-thiolation reaction by being thiocarboxylated (-COSH) at its C-terminus by the MOCS3 homolog UBA4. The sulfur is then transferred to tRNA to form 2-thiolation of mcm(5)S(2)U. Prior mcm(5) tRNA modification by the elongator complex is required for 2-thiolation. Also acts as a ubiquitin-like protein (UBL) that is covalently conjugated via an isopeptide bond to lysine residues of target proteins such as AHP1. The thiocarboxylated form serves as substrate for conjugation and oxidative stress specifically induces the formation of UBL-protein conjugates. The protein is Ubiquitin-related modifier 1 of Yarrowia lipolytica (strain CLIB 122 / E 150) (Yeast).